A 339-amino-acid chain; its full sequence is Uracil nucleotide/cysteinyl leukotriene receptor (339 aa).

Residues 1–36 (MNGLEAALPSLTDNSSLAYSEQCGQETPLENMLFAC) are Extracellular-facing. N14 is a glycosylation site (N-linked (GlcNAc...) asparagine). The helical transmembrane segment at 37–57 (FYLLDFILAFVGNALALWLFI) threads the bilayer. At 58-64 (WDHKSGT) the chain is on the cytoplasmic side. The chain crosses the membrane as a helical span at residues 65–85 (PANVFLMHLAVADLSCVLVLP). Topologically, residues 86–105 (TRLVYHFSGNHWPFGEIPCR) are extracellular. Residues C104 and C181 are joined by a disulfide bond. Residues 106–126 (LTGFLFYLNMYASIYFLTCIS) traverse the membrane as a helical segment. Over 127 to 147 (ADRFLAIVHPVKSLKLRRPLY) the chain is Cytoplasmic. A helical transmembrane segment spans residues 148–168 (AHLACAFLWIVVAVAMAPLLV). Over 169–195 (SPQTVQTNHTVVCLQLYREKASHHALA) the chain is Extracellular. A glycan (N-linked (GlcNAc...) asparagine) is linked at N176. Residues 196-216 (SLAVAFTFPFITTVTCYLLII) form a helical membrane-spanning segment. Over 217-232 (RSLRQGPRIEKHLKNK) the chain is Cytoplasmic. The helical transmembrane segment at 233-253 (AVRMIAMVLAIFLICFVPYHI) threads the bilayer. The Extracellular segment spans residues 254–280 (HRSVYVLHYRGGGTSCAAQRALALGNR). Residues 281–301 (ITSCLTSLNGALDPVMYFFVA) form a helical membrane-spanning segment. At 302–339 (EKFRHALCNLLCSKRLTGPPPSFEGKTNESSLSARSEL) the chain is on the cytoplasmic side.

It belongs to the G-protein coupled receptor 1 family.

The protein localises to the cell membrane. Dual specificity receptor for uracil nucleotides and cysteinyl leukotrienes (CysLTs). Signals through G(i) and inhibition of adenylyl cyclase. May mediate brain damage by nucleotides and CysLTs following ischemia. The chain is Uracil nucleotide/cysteinyl leukotriene receptor from Mus musculus (Mouse).